Here is a 127-residue protein sequence, read N- to C-terminus: RxLR effector protein SFI3 (127 aa).

The N-terminal stretch at 1–20 (MRFLLVAVVAMMALVSSSTA) is a signal peptide. Positions 40 to 62 (RSLRNTEERSIAAILAEAGEEDR) match the RxLR-dEER motif. The tract at residues 72-107 (WYKAKLTPTQVKTVLGVSQAEMNNVAKQLQRLYLGY) is WY-domain.

It belongs to the RxLR effector family. In terms of assembly, forms an unusual trans-homodimer. Interacts with host UBK.

The protein localises to the secreted. It is found in the host nucleus. It localises to the host nucleolus. In terms of biological role, effector that suppresses flg22-induced post-translational MAP kinase activation in potato and tomato, but not in Arabidopsis. The perception of highly conserved pathogen- or microbe-associated molecular patterns (PAMPs/MAMPs), such as flg22, triggers converging signaling pathways recruiting MAP kinase cascades and inducing transcriptional re-programming, yielding a generic antimicrobial response. Does not suppress programmed cell death triggered by the P.infestans elicitin infestin-1 (INF1), or by co-expression of tomato Cf4 with Cladosporium fulvum Avr4. Suppresses early pattern-triggered immunity (PTI) via interaction with the U-box-kinase protein UBK, a positive regulator of specific PTI pathways in both potato and Nicotiana benthamiana. The protein is RxLR effector protein SFI3 of Phytophthora infestans (strain T30-4) (Potato late blight agent).